Reading from the N-terminus, the 282-residue chain is Bifunctional protein FolD (282 aa).

Residues 164–166 (GRS) and Ser189 contribute to the NADP(+) site.

This sequence belongs to the tetrahydrofolate dehydrogenase/cyclohydrolase family. Homodimer.

The catalysed reaction is (6R)-5,10-methylene-5,6,7,8-tetrahydrofolate + NADP(+) = (6R)-5,10-methenyltetrahydrofolate + NADPH. It carries out the reaction (6R)-5,10-methenyltetrahydrofolate + H2O = (6R)-10-formyltetrahydrofolate + H(+). It functions in the pathway one-carbon metabolism; tetrahydrofolate interconversion. Functionally, catalyzes the oxidation of 5,10-methylenetetrahydrofolate to 5,10-methenyltetrahydrofolate and then the hydrolysis of 5,10-methenyltetrahydrofolate to 10-formyltetrahydrofolate. This Lactobacillus gasseri (strain ATCC 33323 / DSM 20243 / BCRC 14619 / CIP 102991 / JCM 1131 / KCTC 3163 / NCIMB 11718 / NCTC 13722 / AM63) protein is Bifunctional protein FolD.